The sequence spans 103 residues: MEYVAAYVMFDKVGKELNERSMTELFNEIGAEIEPETMRLFLSKVSGKSMDEVMSKGKELMASLAISSSQKSEPAQPADTAESTQATENKEEEDEDFDIFAAF.

The interval 64 to 103 (LAISSSQKSEPAQPADTAESTQATENKEEEDEDFDIFAAF) is disordered. The span at 90-103 (KEEEDEDFDIFAAF) shows a compositional bias: acidic residues.

This sequence belongs to the eukaryotic ribosomal protein P1/P2 family. As to quaternary structure, component of the large ribosomal subunit.

It is found in the cytoplasm. Its function is as follows. Plays an important role in the elongation step of protein synthesis. This chain is Large ribosomal subunit protein P2 (RPP2A), found in Encephalitozoon cuniculi (strain GB-M1) (Microsporidian parasite).